The following is a 495-amino-acid chain: Probable cytosol aminopeptidase (495 aa).

2 residues coordinate Mn(2+): Lys266 and Asp271. The active site involves Lys278. Mn(2+)-binding residues include Asp289, Asp348, and Glu350. Residue Arg352 is part of the active site.

It belongs to the peptidase M17 family. It depends on Mn(2+) as a cofactor.

It localises to the cytoplasm. It catalyses the reaction Release of an N-terminal amino acid, Xaa-|-Yaa-, in which Xaa is preferably Leu, but may be other amino acids including Pro although not Arg or Lys, and Yaa may be Pro. Amino acid amides and methyl esters are also readily hydrolyzed, but rates on arylamides are exceedingly low.. It carries out the reaction Release of an N-terminal amino acid, preferentially leucine, but not glutamic or aspartic acids.. Its function is as follows. Presumably involved in the processing and regular turnover of intracellular proteins. Catalyzes the removal of unsubstituted N-terminal amino acids from various peptides. This is Probable cytosol aminopeptidase from Pseudomonas paraeruginosa (strain DSM 24068 / PA7) (Pseudomonas aeruginosa (strain PA7)).